The primary structure comprises 561 residues: Arf-GAP domain and FG repeat-containing protein 1 (561 aa).

In terms of domain architecture, Arf-GAP spans 11–135 (EKHLKMLRDM…WYVPPEQAKV (125 aa)). The segment at 29–52 (CFDCDQRGPTYVNMTVGSFVCTSC) adopts a C4-type zinc-finger fold. At serine 167 the chain carries Phosphoserine. The interval 170-193 (ALHLNKGTPSQSPVVGRSQGQQQE) is disordered. Positions 176 to 191 (GTPSQSPVVGRSQGQQ) are enriched in polar residues. A Phosphothreonine modification is found at threonine 177. Serine 181 and serine 362 each carry phosphoserine. Serine 367 carries O-linked (GlcNAc) serine glycosylation. The segment at 413-433 (SAQTQPASSGPAPFGATPSTN) is disordered.

As to quaternary structure, interacts with FCHO1. Interacts with EPS15R and EPS15. O-glycosylated. In terms of tissue distribution, expressed in the testes (at protein level).

Its subcellular location is the nucleus. The protein localises to the cytoplasmic vesicle. In terms of biological role, required for vesicle docking or fusion during acrosome biogenesis. May play a role in RNA trafficking or localization. The chain is Arf-GAP domain and FG repeat-containing protein 1 (Agfg1) from Mus musculus (Mouse).